A 233-amino-acid chain; its full sequence is H-2 class II histocompatibility antigen, A-R alpha chain (233 aa).

The tract at residues 1 to 88 (EDDIEADHVG…KRSNFTPAAN (88 aa)) is alpha-1. At 1–195 (EDDIEADHVG…IPAPMSELTE (195 aa)) the chain is on the extracellular side. The segment at 89-182 (EAPQATVFPK…GLEEPVLKHW (94 aa)) is alpha-2. The Ig-like C1-type domain occupies 91–183 (PQATVFPKSP…LEEPVLKHWE (93 aa)). Cysteines 111 and 167 form a disulfide. N-linked (GlcNAc...) asparagine glycosylation occurs at Asn-122. Positions 183 to 195 (EPEIPAPMSELTE) are connecting peptide. The helical transmembrane segment at 196 to 221 (TVVCALGLSVGLVGIVVGTIFIIQGL) threads the bilayer. At 222-233 (RSGGTSRHPGPL) the chain is on the cytoplasmic side.

This sequence belongs to the MHC class II family.

The protein localises to the membrane. The polypeptide is H-2 class II histocompatibility antigen, A-R alpha chain (H2-Aa) (Mus musculus (Mouse)).